The primary structure comprises 523 residues: DELLA protein RGL3 (523 aa).

The tract at residues 1-28 (MKRSHQETSVEEEAPSMVEKLENGCGGG) is disordered. The DELLA motif motif lies at 34–38 (DEFLA). An LEXLE motif motif is present at residues 56-60 (LEQLE). The VHYNP motif motif lies at 78 to 82 (VHYNP). In terms of domain architecture, GRAS spans 148–516 (VLIEETGVRL…KPLIAASAWK (369 aa)). Residues 155 to 209 (VRLVQALVACAEAVQLENLSLADALVKRVGLLAASQAGAMGKVATYFAEALARRI) are leucine repeat I (LRI). The segment at 228–293 (QMNFYDSCPY…GGPPSFRLTG (66 aa)) is VHIID. A VHIID motif is present at residues 259–263 (VHVID). Positions 305-337 (ELGWKLAQLAQAIGVEFKFNGLTTERLSDLEPD) are leucine repeat II (LRII). The tract at residues 348-437 (LVVNSVFELH…EVYLGRQILN (90 aa)) is PFYRE. Residues 356–360 (LHPVL) carry the LXXLL motif motif. An SAW region spans residues 440–516 (ATEGSDRIER…KPLIAASAWK (77 aa)).

This sequence belongs to the GRAS family. DELLA subfamily. As to quaternary structure, interacts directly with the GID2/SLY1 component of the SCF(GID2) complex, suggesting that it may be ubiquitinated. Interacts (via N-terminus) with GID1A, GID1B and GID1B (via N-terminus). Interacts with the BOI proteins BOI, BRG1, BRG2 and BRG3. In terms of processing, phosphorylated. May be ubiquitinated. In terms of tissue distribution, expressed at very low level. Mainly expressed in germinating seeds and flowers and siliques. Not expressed in other tissues.

The protein resides in the nucleus. Its function is as follows. Probable transcriptional regulator that acts as a repressor of the gibberellin (GA) signaling pathway. No effect of the BOI proteins on its stability. Probably acts by participating in large multiprotein complexes that repress transcription of GA-inducible genes. Its activity may be regulated by phytohormones such as auxin and ethylene. This Arabidopsis thaliana (Mouse-ear cress) protein is DELLA protein RGL3 (RGL3).